The following is a 50-amino-acid chain: Cytochrome c oxidase subunit 4 (50 aa).

Topologically, residues 2-17 are cytoplasmic; the sequence is ASHHEITDHKHGEMDI. Residues 18–49 form a helical membrane-spanning segment; the sequence is RHQQATFAGFIKGATWVSILSIAVLVFLALAN. A topological domain (periplasmic) is located at residue serine 50.

It is found in the cell inner membrane. The catalysed reaction is 4 Fe(II)-[cytochrome c] + O2 + 8 H(+)(in) = 4 Fe(III)-[cytochrome c] + 2 H2O + 4 H(+)(out). Its function is as follows. Not required for enzymatic activity or proton pumping of the cytochrome c oxidase complex. The polypeptide is Cytochrome c oxidase subunit 4 (ctaH) (Paracoccus denitrificans).